A 150-amino-acid chain; its full sequence is MGRFIFVSFGLLVVFLSLSGTAADCPPDWSSYEGSCYRVFEQKMNWEDAEKFCTQQQTGGHLVSFQSSEEADFVVSLTSPILRDSFVWTGLSDVWKECSFEWSDGSDLSYKDNYQFVFSEYECVASKTKNNKWRIIPCTKLEYFVCEFQA.

The first 23 residues, Met-1–Ala-23, serve as a signal peptide directing secretion. Disulfide bonds link Cys-25/Cys-36, Cys-53/Cys-146, and Cys-123/Cys-138. The 116-residue stretch at Tyr-32–Glu-147 folds into the C-type lectin domain.

It belongs to the snaclec family. Heterodimer of subunits alpha and beta; disulfide-linked. Expressed by the venom gland.

It localises to the secreted. Its function is as follows. This potent antithrombotic agent acts in a calcium-independent manner. Exerts its anticoagulant effect by two distinct mechanisms. It binds to activated thrombin through exosite 1, blocking fibrinogen clotting, platelet activation, factor V activation and other effects, and it interacts with prothrombin (F2), decreasing its proteolytic activation -especially in the presence of factor Va. In vivo, intravenous injection before thrombosis induction causes a significant decrease in thrombus weight. Furthermore, BJC shows a prolonged effect by remaining in the plasma bound to prothrombin for at least 12 hours. This Bothrops jararaca (Jararaca) protein is Snaclec bothrojaracin subunit beta.